Consider the following 266-residue polypeptide: 4-hydroxy-tetrahydrodipicolinate reductase (266 aa).

11-16 (GALGKM) lines the NAD(+) pocket. Lysine 39 serves as a coordination point for NADP(+). Position 100–102 (100–102 (GTT)) interacts with NAD(+). The active-site Proton donor/acceptor is the histidine 156. Histidine 157 is a binding site for (S)-2,3,4,5-tetrahydrodipicolinate. Lysine 160 (proton donor) is an active-site residue. 166-167 (GT) contacts (S)-2,3,4,5-tetrahydrodipicolinate.

The protein belongs to the DapB family.

The protein localises to the cytoplasm. The enzyme catalyses (S)-2,3,4,5-tetrahydrodipicolinate + NAD(+) + H2O = (2S,4S)-4-hydroxy-2,3,4,5-tetrahydrodipicolinate + NADH + H(+). It carries out the reaction (S)-2,3,4,5-tetrahydrodipicolinate + NADP(+) + H2O = (2S,4S)-4-hydroxy-2,3,4,5-tetrahydrodipicolinate + NADPH + H(+). The protein operates within amino-acid biosynthesis; L-lysine biosynthesis via DAP pathway; (S)-tetrahydrodipicolinate from L-aspartate: step 4/4. Its function is as follows. Catalyzes the conversion of 4-hydroxy-tetrahydrodipicolinate (HTPA) to tetrahydrodipicolinate. This is 4-hydroxy-tetrahydrodipicolinate reductase from Syntrophomonas wolfei subsp. wolfei (strain DSM 2245B / Goettingen).